Reading from the N-terminus, the 786-residue chain is DNA repair and recombination protein RAD54-like (786 aa).

Positions 2–9 (RRSLAPSQ) are required for chromatin remodeling, strand pairing activities and coupling of ATPase activity. Thr-22 carries the post-translational modification Phosphothreonine. In terms of domain architecture, Helicase ATP-binding spans 165-340 (EGKRGNFNGC…FSLVNFVNPE (176 aa)). An ATP-binding site is contributed by 178–185 (DEMGLGKT). The DEGH box signature appears at 291–294 (DEGH). In terms of domain architecture, Helicase C-terminal spans 497-654 (LLDFMLAAIR…NNDSAEKHFT (158 aa)). The disordered stretch occupies residues 740-786 (KQPTCITEDNHSEQPQLNSKRNANSVLENDDDEDFDPNSSDEKFLGF). Over residues 752 to 766 (EQPQLNSKRNANSVL) the composition is skewed to polar residues.

Belongs to the SNF2/RAD54 helicase family. Interacts (via N-terminus) with spn-A/Rad51.

The protein resides in the nucleus. In terms of biological role, involved in mitotic DNA repair and meiotic recombination. Functions in the recombinational DNA repair pathway. Essential for interhomolog gene conversion (GC), but may have a less important role in intersister GC than spn-A/Rad51. In the presence of DNA, spn-A/Rad51 enhances the ATPase activity of okr/Rad54. The polypeptide is DNA repair and recombination protein RAD54-like (Drosophila virilis (Fruit fly)).